The sequence spans 101 residues: MVYAIVKAGGRQEKVSVGDIVVVDRVGGEVGDTIELTPILLVDGDKVTNGKDLADVRVSAEIVRPEKGPKITILKFKNKTGYRKRQGHRQKLTRLKVTDIA.

This sequence belongs to the bacterial ribosomal protein bL21 family. Part of the 50S ribosomal subunit. Contacts protein L20.

Its function is as follows. This protein binds to 23S rRNA in the presence of protein L20. This Beutenbergia cavernae (strain ATCC BAA-8 / DSM 12333 / CCUG 43141 / JCM 11478 / NBRC 16432 / NCIMB 13614 / HKI 0122) protein is Large ribosomal subunit protein bL21.